The sequence spans 77 residues: LKKSLFLVTFLALVPLFLCEEEKREEENEERQDDDQSEEKRNLVSALIEGRKYLKNVLKKLNRLKEKNKAKNSKENN.

An N-terminal signal peptide occupies residues 1 to 19; that stretch reads LKKSLFLVTFLALVPLFLC. Positions 20-39 are excised as a propeptide; that stretch reads EEEKREEENEERQDDDQSEE.

It belongs to the frog skin active peptide (FSAP) family. Expressed by the skin glands.

It localises to the secreted. Its function is as follows. Has antimicrobial activity. The sequence is that of Distinctin-like peptide from Pithecopus azureus (Orange-legged monkey tree frog).